A 208-amino-acid chain; its full sequence is Small ribosomal subunit protein uS4 (208 aa).

The region spanning 98–158 (SRLDNAVYRL…EKSRNMQVID (61 aa)) is the S4 RNA-binding domain.

This sequence belongs to the universal ribosomal protein uS4 family. As to quaternary structure, part of the 30S ribosomal subunit. Contacts protein S5. The interaction surface between S4 and S5 is involved in control of translational fidelity.

Functionally, one of the primary rRNA binding proteins, it binds directly to 16S rRNA where it nucleates assembly of the body of the 30S subunit. Its function is as follows. With S5 and S12 plays an important role in translational accuracy. The chain is Small ribosomal subunit protein uS4 from Desulfosudis oleivorans (strain DSM 6200 / JCM 39069 / Hxd3) (Desulfococcus oleovorans).